An 87-amino-acid chain; its full sequence is Chaperone NapD (87 aa).

Belongs to the NapD family. Interacts with the cytoplasmic NapA precursor.

Its subcellular location is the cytoplasm. Chaperone for NapA, the catalytic subunit of the periplasmic nitrate reductase. It binds directly and specifically to the twin-arginine signal peptide of NapA, preventing premature interaction with the Tat translocase and premature export. This chain is Chaperone NapD, found in Escherichia coli O157:H7.